The primary structure comprises 533 residues: Pre-mRNA-splicing factor cwf24 (533 aa).

The span at 1-17 (MEQKNLNINQASGSKIN) shows a compositional bias: polar residues. Residues 1–69 (MEQKNLNINQ…MRDNIPIVSG (69 aa)) form a disordered region. Basic residues predominate over residues 27 to 43 (SRRRHRPRQGLKRKKGF). The C3H1-type zinc-finger motif lies at 184 to 212 (DYQPDVCKDYKLTGYCGYGDTCKFLHMRE). The segment at 254-292 (CLICKKDYRSPIATTCGHHFCEQCAITRYRKTPTCIQCG) adopts an RING-type zinc-finger fold. Positions 379-524 (YFIREITESN…SAFYMVCPLS (146 aa)) constitute an N-acetyltransferase domain.

It belongs to the CWC24 family. Belongs to the 40S cdc5-associated complex (or cwf complex), a spliceosome sub-complex reminiscent of a late-stage spliceosome composed of the U2, U5 and U6 snRNAs and at least brr2, cdc5, cwf2/prp3, cwf3/syf1, cwf4/syf3, cwf5/ecm2, spp42/cwf6, cwf7/spf27, cwf8, cwf9, cwf10, cwf11, cwf12, prp45/cwf13, cwf14, cwf15, cwf16, cwf17, cwf18, cwf19, cwf20, cwf21, cwf22, cwf23, cwf24, cwf25, cwf26, cyp7/cwf27, cwf28, cwf29/ist3, lea1, msl1, prp5/cwf1, prp10, prp12/sap130, prp17, prp22, sap61, sap62, sap114, sap145, slu7, smb1, smd1, smd3, smf1, smg1 and syf2.

It localises to the nucleus. Involved in mRNA splicing. In Schizosaccharomyces pombe (strain 972 / ATCC 24843) (Fission yeast), this protein is Pre-mRNA-splicing factor cwf24 (cwf24).